A 476-amino-acid chain; its full sequence is Lactate utilization protein B (476 aa).

2 4Fe-4S ferredoxin-type domains span residues 304-334 (GGEF…GHTY) and 353-382 (YDDF…LHQL). Residues Cys313, Cys316, Cys319, Cys323, Cys366, Cys369, and Cys373 each contribute to the [4Fe-4S] cluster site. The segment at 452–476 (RDFPAPNKNSFRNWMKHRTKGDEES) is disordered.

Belongs to the LutB/YkgF family.

In terms of biological role, is involved in L-lactate degradation and allows cells to grow with lactate as the sole carbon source. Has probably a role as an electron transporter during oxidation of L-lactate. The chain is Lactate utilization protein B from Lysinibacillus sphaericus (strain C3-41).